A 53-amino-acid polypeptide reads, in one-letter code: UPF0391 membrane protein PA5482 (53 aa).

Helical transmembrane passes span 4 to 24 (WAIT…GGIA) and 29 to 49 (GIAK…FFFG).

It belongs to the UPF0391 family.

Its subcellular location is the cell membrane. The polypeptide is UPF0391 membrane protein PA5482 (Pseudomonas aeruginosa (strain ATCC 15692 / DSM 22644 / CIP 104116 / JCM 14847 / LMG 12228 / 1C / PRS 101 / PAO1)).